Reading from the N-terminus, the 95-residue chain is Putative per-hexamer repeat protein 4 (95 aa).

The protein is Putative per-hexamer repeat protein 4 (Phxr4) of Mus musculus (Mouse).